The sequence spans 266 residues: Ankyrin repeat domain-containing protein 45 (266 aa).

2 stretches are compositionally biased toward acidic residues: residues 1-11 and 18-32; these read MESEGPPESES and QEEENEEEEAQEPEE. A disordered region spans residues 1–43; it reads MESEGPPESESSEFFSQQEEENEEEEAQEPEETGPKNPLLQPA. ANK repeat units lie at residues 76–105 and 109–138; these read VGRNLLYAACMAGQSDVIRALAKYGVNLNE and RGYTLLHCAAAWGRLETLKALVELDVDIEA.

The protein resides in the cytoplasm. It localises to the midbody. Its subcellular location is the midbody ring. It is found in the cleavage furrow. Functionally, may play a role during cell division. This is Ankyrin repeat domain-containing protein 45 from Homo sapiens (Human).